Reading from the N-terminus, the 508-residue chain is Lysine--tRNA ligase (508 aa).

Mg(2+) contacts are provided by glutamate 418 and glutamate 425.

The protein belongs to the class-II aminoacyl-tRNA synthetase family. As to quaternary structure, homodimer. Mg(2+) is required as a cofactor.

The protein resides in the cytoplasm. The enzyme catalyses tRNA(Lys) + L-lysine + ATP = L-lysyl-tRNA(Lys) + AMP + diphosphate. This Burkholderia ambifaria (strain MC40-6) protein is Lysine--tRNA ligase.